Reading from the N-terminus, the 158-residue chain is Ribosome maturation factor RimP (158 aa).

The protein belongs to the RimP family.

It is found in the cytoplasm. In terms of biological role, required for maturation of 30S ribosomal subunits. This is Ribosome maturation factor RimP from Leuconostoc mesenteroides subsp. mesenteroides (strain ATCC 8293 / DSM 20343 / BCRC 11652 / CCM 1803 / JCM 6124 / NCDO 523 / NBRC 100496 / NCIMB 8023 / NCTC 12954 / NRRL B-1118 / 37Y).